Here is a 617-residue protein sequence, read N- to C-terminus: Dihydroxy-acid dehydratase (617 aa).

Aspartate 81 serves as a coordination point for Mg(2+). [2Fe-2S] cluster is bound at residue cysteine 122. Residues aspartate 123 and lysine 124 each contribute to the Mg(2+) site. Lysine 124 carries the post-translational modification N6-carboxylysine. Residue cysteine 197 participates in [2Fe-2S] cluster binding. Glutamate 493 is a Mg(2+) binding site. Serine 519 functions as the Proton acceptor in the catalytic mechanism.

The protein belongs to the IlvD/Edd family. Homodimer. Requires [2Fe-2S] cluster as cofactor. Mg(2+) is required as a cofactor.

The catalysed reaction is (2R)-2,3-dihydroxy-3-methylbutanoate = 3-methyl-2-oxobutanoate + H2O. The enzyme catalyses (2R,3R)-2,3-dihydroxy-3-methylpentanoate = (S)-3-methyl-2-oxopentanoate + H2O. It participates in amino-acid biosynthesis; L-isoleucine biosynthesis; L-isoleucine from 2-oxobutanoate: step 3/4. It functions in the pathway amino-acid biosynthesis; L-valine biosynthesis; L-valine from pyruvate: step 3/4. Functions in the biosynthesis of branched-chain amino acids. Catalyzes the dehydration of (2R,3R)-2,3-dihydroxy-3-methylpentanoate (2,3-dihydroxy-3-methylvalerate) into 2-oxo-3-methylpentanoate (2-oxo-3-methylvalerate) and of (2R)-2,3-dihydroxy-3-methylbutanoate (2,3-dihydroxyisovalerate) into 2-oxo-3-methylbutanoate (2-oxoisovalerate), the penultimate precursor to L-isoleucine and L-valine, respectively. The chain is Dihydroxy-acid dehydratase from Corynebacterium aurimucosum (strain ATCC 700975 / DSM 44827 / CIP 107346 / CN-1) (Corynebacterium nigricans).